Reading from the N-terminus, the 179-residue chain is Large ribosomal subunit protein uL5 (179 aa).

This sequence belongs to the universal ribosomal protein uL5 family. Part of the 50S ribosomal subunit; part of the 5S rRNA/L5/L18/L25 subcomplex. Contacts the 5S rRNA and the P site tRNA. Forms a bridge to the 30S subunit in the 70S ribosome.

Functionally, this is one of the proteins that bind and probably mediate the attachment of the 5S RNA into the large ribosomal subunit, where it forms part of the central protuberance. In the 70S ribosome it contacts protein S13 of the 30S subunit (bridge B1b), connecting the 2 subunits; this bridge is implicated in subunit movement. Contacts the P site tRNA; the 5S rRNA and some of its associated proteins might help stabilize positioning of ribosome-bound tRNAs. The polypeptide is Large ribosomal subunit protein uL5 (Alkaliphilus oremlandii (strain OhILAs) (Clostridium oremlandii (strain OhILAs))).